Reading from the N-terminus, the 310-residue chain is MLSVPKSYTNGKMDQVVFQKQRNRLNQCFFKFKNQTKYIQFRLSEEQYNKLKISGETYGLSPNLYAKKLAQKSHLKKPYLEHDQAKSLLLELSKQGSQFKSASFRKLLDEHQLLASYSKPGYPYDNAVTEVFFKYLKQREINRRTYHSIQEVQLSCFEYIEQFYNNYNPHSANNGLTPNQKEENYFKKNIAHLTETDIVDRLLKGSPALRVGYQLYQDFLYAVKERDYVSFEELLTNNIMLPEGYQTILRTFQKFLPQIKNALQQSYSNGPLECLNNHIKVLKRNAYGFRSFYNFKLRIMIRHGNALIFN.

Residues 24-186 form the Integrase catalytic domain; it reads RLNQCFFKFK…TPNQKEENYF (163 aa).

The chain is ATP-dependent protease from Lactococcus lactis subsp. lactis (Streptococcus lactis).